The sequence spans 160 residues: Type IV major fimbrial protein FimA (160 aa).

A propeptide spans 1–7 (MKSLQKG) (leader sequence). At Phe8 the chain carries N-methylphenylalanine. The chain crosses the membrane as a helical span at residues 8–28 (FTLIELMIVVAIIGILAAIAI).

This sequence belongs to the N-Me-Phe pilin family. The pili are polar flexible filaments of about 5.4 nanometers diameter and 2.5 micrometers average length; they consist of only a single polypeptide chain arranged in a helical configuration of five subunits per turn in the assembled pilus.

It localises to the fimbrium. It is found in the membrane. Functionally, major component of the type IV fimbriae that plays an essential role in twitching motility, natural transformation, and protease secretion. This chain is Type IV major fimbrial protein FimA (fimA), found in Dichelobacter nodosus (Bacteroides nodosus).